Here is a 223-residue protein sequence, read N- to C-terminus: Ribonuclease 3 (223 aa).

An RNase III domain is found at 4 to 127 (LNRLEEHLGY…LMGAIYLESG (124 aa)). Residue Glu-40 participates in Mg(2+) binding. Asp-44 is an active-site residue. Residues Asp-113 and Glu-116 each contribute to the Mg(2+) site. The active site involves Glu-116. Residues 154-223 (DYKTTLQEIT…AWKVLQGMNI (70 aa)) form the DRBM domain.

This sequence belongs to the ribonuclease III family. In terms of assembly, homodimer. The cofactor is Mg(2+).

It localises to the cytoplasm. The enzyme catalyses Endonucleolytic cleavage to 5'-phosphomonoester.. Digests double-stranded RNA. Involved in the processing of primary rRNA transcript to yield the immediate precursors to the large and small rRNAs (23S and 16S). Processes some mRNAs, and tRNAs when they are encoded in the rRNA operon. Processes pre-crRNA and tracrRNA of type II CRISPR loci if present in the organism. This is Ribonuclease 3 from Campylobacter fetus subsp. fetus (strain 82-40).